A 91-amino-acid chain; its full sequence is Cell division protein FtsB (91 aa).

The Cytoplasmic portion of the chain corresponds to 1–3 (MRW). A helical transmembrane segment spans residues 4–21 (PLIVLAVLVIVLQYPLWL). The Periplasmic portion of the chain corresponds to 22 to 91 (GKGGWLRVWD…EIFVHTPRKP (70 aa)). A coiled-coil region spans residues 28–74 (RVWDVDRQLQAQRETNQRLEQRNAGLEAEVRDLKSGNEAVEERARFE).

Belongs to the FtsB family. As to quaternary structure, part of a complex composed of FtsB, FtsL and FtsQ.

It is found in the cell inner membrane. Its function is as follows. Essential cell division protein. May link together the upstream cell division proteins, which are predominantly cytoplasmic, with the downstream cell division proteins, which are predominantly periplasmic. In Aromatoleum aromaticum (strain DSM 19018 / LMG 30748 / EbN1) (Azoarcus sp. (strain EbN1)), this protein is Cell division protein FtsB.